Reading from the N-terminus, the 184-residue chain is Photosystem I assembly protein Ycf4 (184 aa).

The next 2 membrane-spanning stretches (helical) occupy residues 24-44 (WAFI…SSYI) and 57-77 (IIFF…LFIS).

This sequence belongs to the Ycf4 family.

The protein localises to the plastid. Its subcellular location is the chloroplast thylakoid membrane. In terms of biological role, seems to be required for the assembly of the photosystem I complex. The polypeptide is Photosystem I assembly protein Ycf4 (Buxus microphylla (Littleleaf boxwood)).